Reading from the N-terminus, the 314-residue chain is Methionyl-tRNA formyltransferase (314 aa).

Residue 110–113 (SLLP) participates in (6S)-5,6,7,8-tetrahydrofolate binding.

It belongs to the Fmt family.

The catalysed reaction is L-methionyl-tRNA(fMet) + (6R)-10-formyltetrahydrofolate = N-formyl-L-methionyl-tRNA(fMet) + (6S)-5,6,7,8-tetrahydrofolate + H(+). Its function is as follows. Attaches a formyl group to the free amino group of methionyl-tRNA(fMet). The formyl group appears to play a dual role in the initiator identity of N-formylmethionyl-tRNA by promoting its recognition by IF2 and preventing the misappropriation of this tRNA by the elongation apparatus. This is Methionyl-tRNA formyltransferase from Bacillus cytotoxicus (strain DSM 22905 / CIP 110041 / 391-98 / NVH 391-98).